A 198-amino-acid chain; its full sequence is Ribonuclease HII (198 aa).

Positions 10–198 (HLVAGVDEVG…PVKRALGLAS (189 aa)) constitute an RNase H type-2 domain. 3 residues coordinate a divalent metal cation: aspartate 16, glutamate 17, and aspartate 108.

Belongs to the RNase HII family. Mn(2+) serves as cofactor. It depends on Mg(2+) as a cofactor.

Its subcellular location is the cytoplasm. The catalysed reaction is Endonucleolytic cleavage to 5'-phosphomonoester.. Its function is as follows. Endonuclease that specifically degrades the RNA of RNA-DNA hybrids. The polypeptide is Ribonuclease HII (Escherichia coli (strain ATCC 8739 / DSM 1576 / NBRC 3972 / NCIMB 8545 / WDCM 00012 / Crooks)).